The chain runs to 379 residues: Cytochrome b (379 aa).

Transmembrane regions (helical) follow at residues 33-53 (FGSLLGACLTIQIITGLFLAM), 77-98 (WTIRYLHANGASMFFLCLFIHV), 113-133 (WNVGITLLFSVMATAFMGYVL), and 178-198 (FFALHFILPFITSALVMIHLL). Histidine 83 and histidine 97 together coordinate heme b. Residues histidine 182 and histidine 196 each contribute to the heme b site. Position 201 (histidine 201) interacts with a ubiquinone. The next 4 helical transmembrane spans lie at 226–246 (TKDFLGLLLLILLLMTMALFY), 288–308 (LGGVMALILSILILVMFPFLQ), 320–340 (LSQFLFWILVADLLTLTWIGG), and 347–367 (FINIGQMASMLYFSLMIFIMP).

This sequence belongs to the cytochrome b family. As to quaternary structure, the cytochrome bc1 complex contains 11 subunits: 3 respiratory subunits (MT-CYB, CYC1 and UQCRFS1), 2 core proteins (UQCRC1 and UQCRC2) and 6 low-molecular weight proteins (UQCRH/QCR6, UQCRB/QCR7, UQCRQ/QCR8, UQCR10/QCR9, UQCR11/QCR10 and a cleavage product of UQCRFS1). This cytochrome bc1 complex then forms a dimer. It depends on heme b as a cofactor.

The protein resides in the mitochondrion inner membrane. Functionally, component of the ubiquinol-cytochrome c reductase complex (complex III or cytochrome b-c1 complex) that is part of the mitochondrial respiratory chain. The b-c1 complex mediates electron transfer from ubiquinol to cytochrome c. Contributes to the generation of a proton gradient across the mitochondrial membrane that is then used for ATP synthesis. The protein is Cytochrome b (MT-CYB) of Lepilemur sahamalazensis (Sahamalaza sportive lemur).